A 351-amino-acid chain; its full sequence is Probable protein phosphatase 2C 8 (351 aa).

The tract at residues 1–63 (MLEKESDLTA…REAEEDKPSF (63 aa)) is disordered. Positions 54–63 (REAEEDKPSF) are enriched in basic and acidic residues. A PPM-type phosphatase domain is found at 74-348 (EADVAEDKGA…DNCTAIVIVF (275 aa)). Residues D114, G115, D295, and D339 each coordinate Mn(2+).

It belongs to the PP2C family. The cofactor is Mg(2+). Mn(2+) serves as cofactor.

It carries out the reaction O-phospho-L-seryl-[protein] + H2O = L-seryl-[protein] + phosphate. It catalyses the reaction O-phospho-L-threonyl-[protein] + H2O = L-threonyl-[protein] + phosphate. The polypeptide is Probable protein phosphatase 2C 8 (Arabidopsis thaliana (Mouse-ear cress)).